We begin with the raw amino-acid sequence, 457 residues long: Acetylcholine receptor subunit alpha (457 aa).

The N-terminal stretch at 1-20 is a signal peptide; it reads MEPWPLLLLFSLCSAGLVLG. The Extracellular segment spans residues 21-232; sequence SEHETRLVAK…YHFVMQRLPL (212 aa). 2 disulfides stabilise this stretch: Cys148–Cys162 and Cys212–Cys213. A glycan (N-linked (GlcNAc...) asparagine) is linked at Asn161. Residues 233–253 form a helical membrane-spanning segment; it reads YFIVNVIIPCLLFSFLTGLVF. Residues 254 to 264 lie on the Cytoplasmic side of the membrane; it reads YLPTDSGEKMT. Residues 265 to 285 traverse the membrane as a helical segment; sequence LSISVLLSLTVFLLVIVELIP. The Extracellular portion of the chain corresponds to 286–296; the sequence is STSSAVPLIGK. A helical transmembrane segment spans residues 297-317; that stretch reads YMLFTMVFVIASIIITVIVIN. Residues 318-427 are Cytoplasmic-facing; that stretch reads THHRSPSTHV…EWKYVAMVMD (110 aa). A helical membrane pass occupies residues 428 to 448; the sequence is HILLGVFMLVCIIGTLAVFAG. At 449–457 the chain is on the extracellular side; it reads RLIELNQQG.

This sequence belongs to the ligand-gated ion channel (TC 1.A.9) family. Acetylcholine receptor (TC 1.A.9.1) subfamily. Alpha-1/CHRNA1 sub-subfamily. One of the alpha chains that assemble within the acetylcholine receptor, a pentamer of two alpha chains, a beta, a delta, and a gamma (in immature muscle) or epsilon (in mature muscle) chains. The muscle heteropentamer composed of alpha-1, beta-1, delta, epsilon subunits interacts with the alpha-conotoxin ImII. As to quaternary structure, is able to interact with other subunits of the acetylcholine receptor but is not assembled into functional acetylcholine-gated cation-selective channels. In terms of tissue distribution, isoform 1 is only expressed in skeletal muscle. Isoform 2 is constitutively expressed in skeletal muscle, brain, heart, kidney, liver, lung and thymus.

Its subcellular location is the postsynaptic cell membrane. It is found in the cell membrane. The enzyme catalyses K(+)(in) = K(+)(out). The catalysed reaction is Na(+)(in) = Na(+)(out). Functionally, upon acetylcholine binding, the AChR responds by an extensive change in conformation that affects all subunits and leads to opening of an ion-conducting channel across the plasma membrane. Its function is as follows. Non functional acetylcholine receptor alpha subunit which is not integrated into functional acetylcholine-gated cation-selective channels. The polypeptide is Acetylcholine receptor subunit alpha (Homo sapiens (Human)).